The primary structure comprises 183 residues: Ribosome maturation factor RimP (183 aa).

The protein belongs to the RimP family.

The protein resides in the cytoplasm. In terms of biological role, required for maturation of 30S ribosomal subunits. This is Ribosome maturation factor RimP from Mycobacterium bovis (strain ATCC BAA-935 / AF2122/97).